Here is a 330-residue protein sequence, read N- to C-terminus: DNA-directed RNA polymerase subunit alpha (330 aa).

The alpha N-terminal domain (alpha-NTD) stretch occupies residues 1–231 (MQTNLLKPKA…EQLAVFAQLE (231 aa)). Residues 250–330 (FDPILLRPVD…NWPPAGLDKR (81 aa)) form an alpha C-terminal domain (alpha-CTD) region.

Belongs to the RNA polymerase alpha chain family. As to quaternary structure, homodimer. The RNAP catalytic core consists of 2 alpha, 1 beta, 1 beta' and 1 omega subunit. When a sigma factor is associated with the core the holoenzyme is formed, which can initiate transcription.

The catalysed reaction is RNA(n) + a ribonucleoside 5'-triphosphate = RNA(n+1) + diphosphate. DNA-dependent RNA polymerase catalyzes the transcription of DNA into RNA using the four ribonucleoside triphosphates as substrates. In Acidovorax ebreus (strain TPSY) (Diaphorobacter sp. (strain TPSY)), this protein is DNA-directed RNA polymerase subunit alpha.